The chain runs to 58 residues: Dortoxin (58 aa).

The 56-residue stretch at 3-58 folds into the LCN-type CS-alpha/beta domain; it reads VPGNYPLDKDGNTYTCLKLGENKDCQKVCKLHGVQYGYCYAFECWCKEYLDDKDSV. Intrachain disulfides connect Cys-18-Cys-41, Cys-27-Cys-46, and Cys-31-Cys-48.

As to expression, expressed by the venom gland.

The protein resides in the secreted. Binds to sodium channels (Nav) and affects the channel activation process. In mice, causes hyperactivity that persists until death. The sequence is that of Dortoxin from Parabuthus transvaalicus (Transvaal thick-tailed scorpion).